A 282-amino-acid chain; its full sequence is UDP-3-O-acyl-N-acetylglucosamine deacetylase (282 aa).

Residues His80, His240, and Asp244 each contribute to the Zn(2+) site. The active-site Proton donor is the His267.

Belongs to the LpxC family. It depends on Zn(2+) as a cofactor.

It localises to the plastid. The protein localises to the chloroplast. It catalyses the reaction a UDP-3-O-[(3R)-3-hydroxyacyl]-N-acetyl-alpha-D-glucosamine + H2O = a UDP-3-O-[(3R)-3-hydroxyacyl]-alpha-D-glucosamine + acetate. It functions in the pathway glycolipid biosynthesis; lipid IV(A) biosynthesis; lipid IV(A) from (3R)-3-hydroxytetradecanoyl-[acyl-carrier-protein] and UDP-N-acetyl-alpha-D-glucosamine: step 2/6. Functionally, catalyzes the hydrolysis of UDP-3-O-myristoyl-N-acetylglucosamine to form UDP-3-O-myristoylglucosamine and acetate. Involved in the biosynthesis of lipid A, a phosphorylated glycolipid that in bacteria anchors the lipopolysaccharide to the outer membrane of the cell. The target for the lipopolysaccharides produced in the chloroplast could either be the cell envelope of the eukaryote or the plastid membrane. This Cyanidium caldarium (Red alga) protein is UDP-3-O-acyl-N-acetylglucosamine deacetylase.